Consider the following 286-residue polypeptide: Protein NipSnap homolog 2 (286 aa).

The transit peptide at 1–23 (MAARVLRARGAAWAGGLLQRAAP) directs the protein to the mitochondrion.

It belongs to the NipSnap family. Interacts with CALCOCO2/NDP52, NBR1, SQSTM1/p62, TAX1BP1 and WDFY3/ALFY. Interacts with ATG8 family proteins (MAP1LC3A, MAP1LC3B, MAP1LC3C, GABARAP, GABARAPL1 and GABARAPL2). Interacts with VDAC1. Widely expressed. Most abundant in heart and skeletal muscle.

It is found in the mitochondrion matrix. Its function is as follows. Protein involved in mitophagy by facilitating recruitment of the autophagy machinery required for clearance of damaged mitochondria. Accumulates on the mitochondria surface in response to mitochondrial depolarization and acts as a 'eat me' signal by recruiting proteins involved in selective autophagy, such as autophagy receptors (CALCOCO2/NDP52, NBR1, SQSTM1/p62, TAX1BP1 and WDFY3/ALFY) and ATG8 family proteins (MAP1LC3A, MAP1LC3B, MAP1LC3C, GABARAP, GABARAPL1 and GABARAPL2). This Homo sapiens (Human) protein is Protein NipSnap homolog 2.